Consider the following 122-residue polypeptide: Large ribosomal subunit protein uL14 (122 aa).

Belongs to the universal ribosomal protein uL14 family. As to quaternary structure, part of the 50S ribosomal subunit. Forms a cluster with proteins L3 and L19. In the 70S ribosome, L14 and L19 interact and together make contacts with the 16S rRNA in bridges B5 and B8.

Functionally, binds to 23S rRNA. Forms part of two intersubunit bridges in the 70S ribosome. The chain is Large ribosomal subunit protein uL14 from Caulobacter sp. (strain K31).